The sequence spans 260 residues: Triosephosphate isomerase (260 aa).

11–13 (NWK) lines the substrate pocket. The active-site Electrophile is His-103. The active-site Proton acceptor is Glu-175. Residues Gly-181, Ser-220, and 241–242 (GG) contribute to the substrate site.

Belongs to the triosephosphate isomerase family. As to quaternary structure, homodimer.

Its subcellular location is the cytoplasm. The enzyme catalyses D-glyceraldehyde 3-phosphate = dihydroxyacetone phosphate. It functions in the pathway carbohydrate biosynthesis; gluconeogenesis. Its pathway is carbohydrate degradation; glycolysis; D-glyceraldehyde 3-phosphate from glycerone phosphate: step 1/1. Its function is as follows. Involved in the gluconeogenesis. Catalyzes stereospecifically the conversion of dihydroxyacetone phosphate (DHAP) to D-glyceraldehyde-3-phosphate (G3P). The protein is Triosephosphate isomerase of Shewanella sediminis (strain HAW-EB3).